The primary structure comprises 122 residues: NADPH-dependent 7-cyano-7-deazaguanine reductase (122 aa).

The active-site Thioimide intermediate is cysteine 34. Aspartate 41 (proton donor) is an active-site residue. Substrate-binding positions include 56 to 58 (VEL) and 75 to 76 (HE).

The protein belongs to the GTP cyclohydrolase I family. QueF type 1 subfamily.

It is found in the cytoplasm. The catalysed reaction is 7-aminomethyl-7-carbaguanine + 2 NADP(+) = 7-cyano-7-deazaguanine + 2 NADPH + 3 H(+). It functions in the pathway tRNA modification; tRNA-queuosine biosynthesis. In terms of biological role, catalyzes the NADPH-dependent reduction of 7-cyano-7-deazaguanine (preQ0) to 7-aminomethyl-7-deazaguanine (preQ1). This chain is NADPH-dependent 7-cyano-7-deazaguanine reductase, found in Anaeromyxobacter dehalogenans (strain 2CP-1 / ATCC BAA-258).